Reading from the N-terminus, the 296-residue chain is Pantothenate synthetase (296 aa).

Residue 31-38 coordinates ATP; that stretch reads MGYLHEGH. Residue His-38 is the Proton donor of the active site. Gln-62 is a binding site for (R)-pantoate. Gln-62 provides a ligand contact to beta-alanine. 148-151 is an ATP binding site; it reads GEKD. Gln-154 lines the (R)-pantoate pocket. ATP contacts are provided by residues Val-177 and 185–188; that span reads LSSR.

Belongs to the pantothenate synthetase family. As to quaternary structure, homodimer.

The protein localises to the cytoplasm. The catalysed reaction is (R)-pantoate + beta-alanine + ATP = (R)-pantothenate + AMP + diphosphate + H(+). The protein operates within cofactor biosynthesis; (R)-pantothenate biosynthesis; (R)-pantothenate from (R)-pantoate and beta-alanine: step 1/1. Functionally, catalyzes the condensation of pantoate with beta-alanine in an ATP-dependent reaction via a pantoyl-adenylate intermediate. The chain is Pantothenate synthetase from Deinococcus geothermalis (strain DSM 11300 / CIP 105573 / AG-3a).